The following is a 242-amino-acid chain: Uridylate kinase (242 aa).

Residue 11–14 (KLSG) coordinates ATP. The interval 19-24 (GNMGYG) is involved in allosteric activation by GTP. UMP is bound at residue Gly53. Residues Gly54 and Arg58 each contribute to the ATP site. UMP is bound by residues Asp73 and 134 to 141 (SGNPFFTT). ATP contacts are provided by Thr161, Tyr167, and Asp170.

The protein belongs to the UMP kinase family. Homohexamer.

The protein resides in the cytoplasm. The enzyme catalyses UMP + ATP = UDP + ADP. It functions in the pathway pyrimidine metabolism; CTP biosynthesis via de novo pathway; UDP from UMP (UMPK route): step 1/1. Allosterically activated by GTP. Inhibited by UTP. In terms of biological role, catalyzes the reversible phosphorylation of UMP to UDP. This chain is Uridylate kinase, found in Nostoc sp. (strain PCC 7120 / SAG 25.82 / UTEX 2576).